Consider the following 404-residue polypeptide: Photosynthetic reaction center cytochrome c subunit (404 aa).

The N-terminal stretch at 1-22 is a signal peptide; it reads MSPAQQLTLPAVIVVASVMLLG. Cysteine 23 carries N-palmitoyl cysteine lipidation. Cysteine 23 carries S-diacylglycerol cysteine lipidation. Methionine 94, cysteine 107, cysteine 110, histidine 111, methionine 130, histidine 144, cysteine 152, cysteine 155, histidine 156, methionine 236, cysteine 247, cysteine 250, histidine 251, cysteine 307, cysteine 310, and histidine 311 together coordinate heme. The segment at 346–404 is disordered; the sequence is ASEAAPAAATEAAPEAPAQEVPAAEAVPAAAEPGAAEAAGSVEPAPVEEVAPAPAAQRL.

Component of the photosynthetic reaction center composed of protein subunits L (PufL), M (PufM), H (PuhA) and cytochrome C (PufC). The reaction center interacts with light-harvesting antenna complex LH1. Post-translationally, binds 4 heme groups per subunit.

Its subcellular location is the cellular chromatophore membrane. The reaction center of purple bacteria contains a tightly bound cytochrome molecule which re-reduces the photo oxidized primary electron donor. The polypeptide is Photosynthetic reaction center cytochrome c subunit (Thermochromatium tepidum (Chromatium tepidum)).